The sequence spans 216 residues: ATP phosphoribosyltransferase (216 aa).

Belongs to the ATP phosphoribosyltransferase family. Short subfamily. Heteromultimer composed of HisG and HisZ subunits.

Its subcellular location is the cytoplasm. The enzyme catalyses 1-(5-phospho-beta-D-ribosyl)-ATP + diphosphate = 5-phospho-alpha-D-ribose 1-diphosphate + ATP. It participates in amino-acid biosynthesis; L-histidine biosynthesis; L-histidine from 5-phospho-alpha-D-ribose 1-diphosphate: step 1/9. Functionally, catalyzes the condensation of ATP and 5-phosphoribose 1-diphosphate to form N'-(5'-phosphoribosyl)-ATP (PR-ATP). Has a crucial role in the pathway because the rate of histidine biosynthesis seems to be controlled primarily by regulation of HisG enzymatic activity. The protein is ATP phosphoribosyltransferase of Microcystis aeruginosa (strain NIES-843 / IAM M-2473).